The chain runs to 339 residues: Alpha-ketoglutarate-dependent dioxygenase btcD (339 aa).

Position 96 (H96) interacts with substrate. Fe cation contacts are provided by H140 and D142. T173 is a 2-oxoglutarate binding site. A disordered region spans residues 207-230 (DGSDPKFQVPRGSPANVGTNLRPT). A Fe cation-binding site is contributed by H302. Residues R314 and R318 each coordinate 2-oxoglutarate. R318 provides a ligand contact to substrate.

This sequence belongs to the TfdA dioxygenase family. It depends on Fe(2+) as a cofactor.

It participates in secondary metabolite biosynthesis; terpenoid biosynthesis. Alpha-ketoglutarate-dependent dioxygenase; part of the gene cluster that mediates the biosynthesis of betaestacins. The bifunctional terpene synthase btcA converts isopentenyl diphosphate (IPP) and dimethylallyl diphosphate (DMAPP) into the sesterterpene betaestacin I. The C-terminal prenyltransferase (PT) domain of btcA catalyzes formation of GFPP, whereas the N-terminal terpene cyclase (TC) domain catalyzes the cyclization of GFPP into betaestacin I. The cytochrome P450 monooxygenase btcB is then responsible for the six-step oxidation of betaestacin I to yield betaestacin II. The roles of the cytochrome P450 monooxygenase btcC and the alpha-ketoglutarate-dependent dioxygenase btcD have not been identified yet. The sequence is that of Alpha-ketoglutarate-dependent dioxygenase btcD from Neocamarosporium betae (Beet black rot fungus).